The primary structure comprises 159 residues: Crossover junction endodeoxyribonuclease RuvC (159 aa).

Catalysis depends on residues aspartate 7, glutamate 67, and aspartate 139. Mg(2+) is bound by residues aspartate 7, glutamate 67, and aspartate 139.

It belongs to the RuvC family. As to quaternary structure, homodimer which binds Holliday junction (HJ) DNA. The HJ becomes 2-fold symmetrical on binding to RuvC with unstacked arms; it has a different conformation from HJ DNA in complex with RuvA. In the full resolvosome a probable DNA-RuvA(4)-RuvB(12)-RuvC(2) complex forms which resolves the HJ. Mg(2+) serves as cofactor.

It localises to the cytoplasm. The catalysed reaction is Endonucleolytic cleavage at a junction such as a reciprocal single-stranded crossover between two homologous DNA duplexes (Holliday junction).. Its function is as follows. The RuvA-RuvB-RuvC complex processes Holliday junction (HJ) DNA during genetic recombination and DNA repair. Endonuclease that resolves HJ intermediates. Cleaves cruciform DNA by making single-stranded nicks across the HJ at symmetrical positions within the homologous arms, yielding a 5'-phosphate and a 3'-hydroxyl group; requires a central core of homology in the junction. The consensus cleavage sequence is 5'-(A/T)TT(C/G)-3'. Cleavage occurs on the 3'-side of the TT dinucleotide at the point of strand exchange. HJ branch migration catalyzed by RuvA-RuvB allows RuvC to scan DNA until it finds its consensus sequence, where it cleaves and resolves the cruciform DNA. The polypeptide is Crossover junction endodeoxyribonuclease RuvC (Orientia tsutsugamushi (strain Ikeda) (Rickettsia tsutsugamushi)).